Consider the following 290-residue polypeptide: ATP synthase gamma chain (290 aa).

This sequence belongs to the ATPase gamma chain family. As to quaternary structure, F-type ATPases have 2 components, CF(1) - the catalytic core - and CF(0) - the membrane proton channel. CF(1) has five subunits: alpha(3), beta(3), gamma(1), delta(1), epsilon(1). CF(0) has three main subunits: a, b and c.

It is found in the cell inner membrane. Produces ATP from ADP in the presence of a proton gradient across the membrane. The gamma chain is believed to be important in regulating ATPase activity and the flow of protons through the CF(0) complex. The protein is ATP synthase gamma chain of Bradyrhizobium diazoefficiens (strain JCM 10833 / BCRC 13528 / IAM 13628 / NBRC 14792 / USDA 110).